Here is a 190-residue protein sequence, read N- to C-terminus: UPF0340 protein BT9727_4999 (190 aa).

Belongs to the UPF0340 family.

The polypeptide is UPF0340 protein BT9727_4999 (Bacillus thuringiensis subsp. konkukian (strain 97-27)).